We begin with the raw amino-acid sequence, 87 residues long: Glutaredoxin (87 aa).

In terms of domain architecture, Glutaredoxin spans 1-87 (MFVVIFGRPG…YAKENLGLFD (87 aa)). C11 and C14 are joined by a disulfide.

This sequence belongs to the glutaredoxin family. As to quaternary structure, monomer.

Its subcellular location is the cytoplasm. In terms of biological role, has a glutathione-disulfide oxidoreductase activity in the presence of NADPH and glutathione reductase. Reduces low molecular weight disulfides and proteins. In Vibrio cholerae serotype O1 (strain ATCC 39315 / El Tor Inaba N16961), this protein is Glutaredoxin (grx).